Consider the following 380-residue polypeptide: Queuine tRNA-ribosyltransferase (380 aa).

The active-site Proton acceptor is the D96. Substrate contacts are provided by residues 96-100 (DSGGF), D150, Q193, and G220. Residues 251–257 (GVGAPDS) form an RNA binding region. D270 functions as the Nucleophile in the catalytic mechanism. The segment at 275 to 279 (TRIAR) is RNA binding; important for wobble base 34 recognition. C308, C310, C313, and H339 together coordinate Zn(2+).

Belongs to the queuine tRNA-ribosyltransferase family. In terms of assembly, homodimer. Within each dimer, one monomer is responsible for RNA recognition and catalysis, while the other monomer binds to the replacement base PreQ1. Requires Zn(2+) as cofactor.

It carries out the reaction 7-aminomethyl-7-carbaguanine + guanosine(34) in tRNA = 7-aminomethyl-7-carbaguanosine(34) in tRNA + guanine. It participates in tRNA modification; tRNA-queuosine biosynthesis. In terms of biological role, catalyzes the base-exchange of a guanine (G) residue with the queuine precursor 7-aminomethyl-7-deazaguanine (PreQ1) at position 34 (anticodon wobble position) in tRNAs with GU(N) anticodons (tRNA-Asp, -Asn, -His and -Tyr). Catalysis occurs through a double-displacement mechanism. The nucleophile active site attacks the C1' of nucleotide 34 to detach the guanine base from the RNA, forming a covalent enzyme-RNA intermediate. The proton acceptor active site deprotonates the incoming PreQ1, allowing a nucleophilic attack on the C1' of the ribose to form the product. After dissociation, two additional enzymatic reactions on the tRNA convert PreQ1 to queuine (Q), resulting in the hypermodified nucleoside queuosine (7-(((4,5-cis-dihydroxy-2-cyclopenten-1-yl)amino)methyl)-7-deazaguanosine). The protein is Queuine tRNA-ribosyltransferase of Streptococcus mutans serotype c (strain ATCC 700610 / UA159).